The following is a 331-amino-acid chain: Isopenicillin N synthase (331 aa).

Isopenicillin N is bound by residues arginine 87, tyrosine 91, serine 183, and tyrosine 189. Positions 87, 91, 183, 189, 214, and 216 each coordinate N-[(5S)-5-amino-5-carboxypentanoyl]-L-cysteinyl-D-valine. The Fe2OG dioxygenase domain occupies 176 to 288 (KKEDALSSVV…RQSLPFFVNL (113 aa)). Positions 214, 216, and 270 each coordinate Fe(2+). 2-oxoglutarate is bound at residue arginine 279. Serine 281 serves as a coordination point for isopenicillin N. Serine 281 is a binding site for N-[(5S)-5-amino-5-carboxypentanoyl]-L-cysteinyl-D-valine.

It belongs to the iron/ascorbate-dependent oxidoreductase family. As to quaternary structure, monomer. Requires Fe(2+) as cofactor.

It localises to the cytoplasm. Its subcellular location is the cytosol. The catalysed reaction is N-[(5S)-5-amino-5-carboxypentanoyl]-L-cysteinyl-D-valine + O2 = isopenicillin N + 2 H2O. It participates in antibiotic biosynthesis; penicillin G biosynthesis; penicillin G from L-alpha-aminoadipate and L-cysteine and L-valine: step 2/3. Functionally, isopenicillin N synthase; part of the gene cluster that mediates the biosynthesis of penicillin, the world's most important antibiotic. IpnA catalyzes the cyclization of the tripeptide N-[(5S)-5-amino-5-carboxypentanoyl]-L-cysteinyl-D-valine (LLD-ACV or ACV) to form isopenicillin N (IPN) that contains the beta-lactam nucleus. The penicillin biosynthesis occurs via 3 enzymatic steps, the first corresponding to the production of the tripeptide N-[(5S)-5-amino-5-carboxypentanoyl]-L-cysteinyl-D-valine (LLD-ACV or ACV) by the NRPS acvA. The tripeptide ACV is then cyclized to isopenicillin N (IPN) by the isopenicillin N synthase ipnA that forms the beta-lactam nucleus. Finally, the alpha-aminoadipyl side chain is exchanged for phenylacetic acid by the isopenicillin N acyltransferase aatA to yield penicillin in the peroxisomal matrix. This is Isopenicillin N synthase from Penicillium chrysogenum (Penicillium notatum).